The following is a 753-amino-acid chain: Polyribonucleotide nucleotidyltransferase (753 aa).

2 residues coordinate Mg(2+): Asp543 and Asp549. In terms of domain architecture, KH spans 609-668; it reads PRITTVKIPVAKIGELIGPKGKNINALTEETGANISIEDDGTVFISAADGASAEAAIEKI. One can recognise an S1 motif domain in the interval 680–749; sequence GERFLGTVVK…NRGKISLVPV (70 aa).

This sequence belongs to the polyribonucleotide nucleotidyltransferase family. Requires Mg(2+) as cofactor.

It localises to the cytoplasm. It carries out the reaction RNA(n+1) + phosphate = RNA(n) + a ribonucleoside 5'-diphosphate. Involved in mRNA degradation. Catalyzes the phosphorolysis of single-stranded polyribonucleotides processively in the 3'- to 5'-direction. The protein is Polyribonucleotide nucleotidyltransferase of Corynebacterium glutamicum (strain ATCC 13032 / DSM 20300 / JCM 1318 / BCRC 11384 / CCUG 27702 / LMG 3730 / NBRC 12168 / NCIMB 10025 / NRRL B-2784 / 534).